The primary structure comprises 336 residues: tRNA N6-adenosine threonylcarbamoyltransferase (336 aa).

Histidine 110 and histidine 114 together coordinate Fe cation. Substrate is bound by residues leucine 133–lysine 137, aspartate 166, glycine 179, and asparagine 271. Position 300 (aspartate 300) interacts with Fe cation.

This sequence belongs to the KAE1 / TsaD family. Fe(2+) is required as a cofactor.

Its subcellular location is the cytoplasm. The enzyme catalyses L-threonylcarbamoyladenylate + adenosine(37) in tRNA = N(6)-L-threonylcarbamoyladenosine(37) in tRNA + AMP + H(+). Functionally, required for the formation of a threonylcarbamoyl group on adenosine at position 37 (t(6)A37) in tRNAs that read codons beginning with adenine. Is involved in the transfer of the threonylcarbamoyl moiety of threonylcarbamoyl-AMP (TC-AMP) to the N6 group of A37, together with TsaE and TsaB. TsaD likely plays a direct catalytic role in this reaction. The protein is tRNA N6-adenosine threonylcarbamoyltransferase of Buchnera aphidicola subsp. Acyrthosiphon pisum (strain 5A).